A 396-amino-acid chain; its full sequence is 1-deoxy-D-xylulose 5-phosphate reductoisomerase (396 aa).

Residues threonine 14, glycine 15, serine 16, isoleucine 17, glycine 40, and asparagine 128 each contribute to the NADPH site. Residue lysine 129 coordinates 1-deoxy-D-xylulose 5-phosphate. Glutamate 130 is a binding site for NADPH. A Mn(2+)-binding site is contributed by aspartate 154. Residues serine 155, glutamate 156, serine 180, and histidine 203 each contribute to the 1-deoxy-D-xylulose 5-phosphate site. A Mn(2+)-binding site is contributed by glutamate 156. Residue glycine 209 participates in NADPH binding. 4 residues coordinate 1-deoxy-D-xylulose 5-phosphate: serine 216, asparagine 221, lysine 222, and glutamate 225. Residue glutamate 225 participates in Mn(2+) binding.

It belongs to the DXR family. Mg(2+) is required as a cofactor. It depends on Mn(2+) as a cofactor.

The enzyme catalyses 2-C-methyl-D-erythritol 4-phosphate + NADP(+) = 1-deoxy-D-xylulose 5-phosphate + NADPH + H(+). It functions in the pathway isoprenoid biosynthesis; isopentenyl diphosphate biosynthesis via DXP pathway; isopentenyl diphosphate from 1-deoxy-D-xylulose 5-phosphate: step 1/6. Catalyzes the NADPH-dependent rearrangement and reduction of 1-deoxy-D-xylulose-5-phosphate (DXP) to 2-C-methyl-D-erythritol 4-phosphate (MEP). This is 1-deoxy-D-xylulose 5-phosphate reductoisomerase from Xylella fastidiosa (strain 9a5c).